We begin with the raw amino-acid sequence, 198 residues long: Transcriptional regulator GfcR (198 aa).

This sequence belongs to the purine/pyrimidine phosphoribosyltransferase family. GfcR subfamily.

The sequence is that of Transcriptional regulator GfcR from Methanosphaera stadtmanae (strain ATCC 43021 / DSM 3091 / JCM 11832 / MCB-3).